Reading from the N-terminus, the 337-residue chain is ATP-dependent 6-phosphofructokinase (337 aa).

An ATP-binding site is contributed by G11. ADP is bound at residue 21–25; sequence RAVVR. ATP is bound by residues 72–73 and 102–105; these read RY and GDGS. D103 lines the Mg(2+) pocket. Position 125-127 (125-127) interacts with substrate; sequence TID. D127 acts as the Proton acceptor in catalysis. R154 provides a ligand contact to ADP. Residues R162 and 169–171 contribute to the substrate site; that span reads MGR. ADP-binding positions include 185 to 187, K212, and 214 to 216; these read GAD and KNH. Residues E223, R245, and 251-254 each bind substrate; that span reads HILR.

It belongs to the phosphofructokinase type A (PFKA) family. ATP-dependent PFK group I subfamily. Prokaryotic clade 'B1' sub-subfamily. Homotetramer. The cofactor is Mg(2+).

Its subcellular location is the cytoplasm. It catalyses the reaction beta-D-fructose 6-phosphate + ATP = beta-D-fructose 1,6-bisphosphate + ADP + H(+). It participates in carbohydrate degradation; glycolysis; D-glyceraldehyde 3-phosphate and glycerone phosphate from D-glucose: step 3/4. Its activity is regulated as follows. Allosterically activated by ADP and other diphosphonucleosides, and allosterically inhibited by phosphoenolpyruvate. In terms of biological role, catalyzes the phosphorylation of D-fructose 6-phosphate to fructose 1,6-bisphosphate by ATP, the first committing step of glycolysis. The polypeptide is ATP-dependent 6-phosphofructokinase (Streptococcus pyogenes serotype M1).